The primary structure comprises 307 residues: Ribosomal RNA small subunit methyltransferase H (307 aa).

S-adenosyl-L-methionine-binding positions include 31 to 33 (GGH), aspartate 51, tyrosine 83, aspartate 97, and glutamine 104.

Belongs to the methyltransferase superfamily. RsmH family.

The protein resides in the cytoplasm. It carries out the reaction cytidine(1402) in 16S rRNA + S-adenosyl-L-methionine = N(4)-methylcytidine(1402) in 16S rRNA + S-adenosyl-L-homocysteine + H(+). In terms of biological role, specifically methylates the N4 position of cytidine in position 1402 (C1402) of 16S rRNA. The sequence is that of Ribosomal RNA small subunit methyltransferase H from Buchnera aphidicola subsp. Cinara cedri (strain Cc).